We begin with the raw amino-acid sequence, 146 residues long: MKKLLLVNGPNLNRLGVREVNVYGKGTLATLEVDMKQEAETMGVELECFQSNHEGAIIDIIHEAEDIYKGIILNPGAFTHYSYAIRDAIASISIPVIEVHISNIHQRESFRHESVTAAVCAGQIVGFGFYGYKLALFALMEKLREA.

Tyrosine 23 serves as the catalytic Proton acceptor. 3 residues coordinate substrate: asparagine 74, histidine 80, and aspartate 87. Residue histidine 100 is the Proton donor of the active site. Substrate contacts are provided by residues 101–102 and arginine 111; that span reads IS.

This sequence belongs to the type-II 3-dehydroquinase family. As to quaternary structure, homododecamer.

The enzyme catalyses 3-dehydroquinate = 3-dehydroshikimate + H2O. The protein operates within metabolic intermediate biosynthesis; chorismate biosynthesis; chorismate from D-erythrose 4-phosphate and phosphoenolpyruvate: step 3/7. Catalyzes a trans-dehydration via an enolate intermediate. The sequence is that of 3-dehydroquinate dehydratase from Bacillus cereus (strain B4264).